Reading from the N-terminus, the 497-residue chain is tRNA-2-methylthio-N(6)-dimethylallyladenosine synthase (497 aa).

The tract at residues 1–50 (MTGTSNIPTHGKEHKDAPALLPLPAPNPHHTHAAHPGNPSHDRPPSRGKL) is disordered. One can recognise an MTTase N-terminal domain in the interval 48–165 (GKLFIKTHGC…LPDMIRARRE (118 aa)). [4Fe-4S] cluster is bound by residues Cys-57, Cys-94, Cys-128, Cys-202, Cys-206, and Cys-209. The Radical SAM core domain maps to 188–430 (RAEGPSAFVS…QKHINTYAAD (243 aa)). The TRAM domain occupies 433 to 496 (KRMIGTVQTV…SNSLRGRVHT (64 aa)).

Belongs to the methylthiotransferase family. MiaB subfamily. In terms of assembly, monomer. The cofactor is [4Fe-4S] cluster.

The protein resides in the cytoplasm. The catalysed reaction is N(6)-dimethylallyladenosine(37) in tRNA + (sulfur carrier)-SH + AH2 + 2 S-adenosyl-L-methionine = 2-methylsulfanyl-N(6)-dimethylallyladenosine(37) in tRNA + (sulfur carrier)-H + 5'-deoxyadenosine + L-methionine + A + S-adenosyl-L-homocysteine + 2 H(+). Catalyzes the methylthiolation of N6-(dimethylallyl)adenosine (i(6)A), leading to the formation of 2-methylthio-N6-(dimethylallyl)adenosine (ms(2)i(6)A) at position 37 in tRNAs that read codons beginning with uridine. In Xylella fastidiosa (strain 9a5c), this protein is tRNA-2-methylthio-N(6)-dimethylallyladenosine synthase.